Here is a 372-residue protein sequence, read N- to C-terminus: Protein phosphatase Mn(2+)-dependent 1K (372 aa).

Residues 1-29 (MSTAALITLVRSGGNQVRRRVLLSSRLLQ) constitute a mitochondrion transit peptide. The tract at residues 34-55 (VTPTCHSSTSEPRCSRFDPDGS) is disordered. Residues 46 to 61 (RCSRFDPDGSGSPATW) form a critical for association with the BCKDH complex region. A PPM-type phosphatase domain is found at 94-346 (NVGCASQIGK…DNSTAVVVPF (253 aa)). Mn(2+) is bound by residues D127 and G128. S248 is modified (phosphoserine). Mn(2+) is bound by residues D298 and D337.

The protein belongs to the PP2C family. As to quaternary structure, monomer. Interacts with E1 and E2 components of the branched-chain alpha-ketoacid dehydrogenase (BCKDH) complex; this interaction requires colocalization in mitochondria. Interacts with BCKDHA but not with BCKDHB of the E1 component. Interacts with the 24-meric E2 core composed of DBT monomers with a 24:1 stoichiometry; the N-terminal region (residues 49-61) of PPM1K and C-terminal linker of the lipoyl domain of DBT (residues 145-160) are critical for this interaction, whereas the lipoyl prosthetic group is dispensable. Competes with BCKDK for binding to the E2 core; this interaction is modulated by branched-chain alpha-keto acids. At steady state, BCKDH holoenzyme preferentially binds BCKDK and BCKDHA is phosphorylated. In response to high levels of branched-chain alpha-keto acids, the inhibitory BCKDK is replaced by activating PPM1K leading to BCKDHA dephosphorylation and BCAA degradation. It depends on Mn(2+) as a cofactor.

The protein resides in the mitochondrion matrix. It carries out the reaction O-phospho-L-seryl-[3-methyl-2-oxobutanoate dehydrogenase] + H2O = L-seryl-[3-methyl-2-oxobutanoate dehydrogenase] + phosphate. The catalysed reaction is O-phospho-L-seryl-[protein] + H2O = L-seryl-[protein] + phosphate. It participates in protein modification. Its activity is regulated as follows. Up-regulated upon interaction with the 24-meric DBT/E2 core of the BCKDH complex. Inhibited by Mg(2+) and Ca(2+) ions likely by competing with Mn(2+) ions for binding to the same metal-binding sites. In terms of biological role, serine/threonine-protein phosphatase component of macronutrients metabolism. Forms a functional kinase and phosphatase pair with BCKDK, serving as a metabolic regulatory node that coordinates branched-chain amino acids (BCAAs) with glucose and lipid metabolism via two distinct phosphoprotein targets: mitochondrial BCKDHA subunit of the branched-chain alpha-ketoacid dehydrogenase (BCKDH) complex and cytosolic ACLY, a lipogenic enzyme of Krebs cycle. At high levels of branched-chain ketoacids, dephosphorylates and activates mitochondrial BCKDH complex, a multisubunit complex consisting of three multimeric components each involved in different steps of BCAA catabolism: E1 composed of BCKDHA and BCKDHB, E2 core composed of DBT monomers, and E3 composed of DLD monomers. Tightly associates with the E2 component of BCKDH complex and dephosphorylates BCKDHA on Ser-337. Regulates the reversible phosphorylation of ACLY in response to changes in cellular carbohydrate abundance such as occurs during fasting to feeding metabolic transition. At fasting state, appears to dephosphorylate ACLY on Ser-455 and inactivate it. Refeeding stimulates MLXIPL/ChREBP transcription factor, leading to increased BCKDK to PPM1K expression ratio, phosphorylation and activation of ACLY that ultimately results in the generation of malonyl-CoA and oxaloacetate immediate substrates of de novo lipogenesis and gluconeogenesis, respectively. Recognizes phosphosites having SxS or RxxS motifs and strictly depends on Mn(2+) ions for the phosphatase activity. Regulates Ca(2+)-induced opening of mitochondrial transition pore and apoptotic cell death. This is Protein phosphatase Mn(2+)-dependent 1K from Homo sapiens (Human).